Consider the following 185-residue polypeptide: Ribosome-recycling factor (185 aa).

The protein belongs to the RRF family.

Its subcellular location is the cytoplasm. Functionally, responsible for the release of ribosomes from messenger RNA at the termination of protein biosynthesis. May increase the efficiency of translation by recycling ribosomes from one round of translation to another. This chain is Ribosome-recycling factor, found in Haemophilus ducreyi (strain 35000HP / ATCC 700724).